Consider the following 464-residue polypeptide: Chitotriosidase-1 (464 aa).

A signal peptide spans 1–21; that stretch reads MVQSLAWAGVMTLLMVQWGSA. The GH18 domain occupies 22–386; the sequence is AKLVCYLTNW…RTLRQELNLP (365 aa). Cys-26 and Cys-51 are oxidised to a cystine. Chitin-binding positions include 70-71 and 97-100; these read EH and GGWT. Catalysis depends on Glu-140, which acts as the Proton donor. 210–213 lines the chitin pocket; sequence MAYD. Cys-307 and Cys-368 are oxidised to a cystine. The disordered stretch occupies residues 385 to 416; that stretch reads LPSETPRSPEQIIPEPRPSSMPEQGPSPGLDN. Positions 415–464 constitute a Chitin-binding type-2 domain; that stretch reads DNFCQGKADGVYPNPGDESTYYNCGGGRLFQQSCPPGLVFRASCKCCTWS. An intrachain disulfide couples Cys-448 to Cys-461.

The protein belongs to the glycosyl hydrolase 18 family. Chitinase class II subfamily. Monomer. Highly expressed in tongue, stomach, kidney, brain, skin, testis, and bone marrow. Low level of expression was found in lung, heart, spleen, small intestine, and liver. Not detectable in pancreas, salivary gland, large intestine, uterus, or peripheral blood mononuclear cells (PBMC).

It localises to the secreted. The protein resides in the lysosome. It carries out the reaction Random endo-hydrolysis of N-acetyl-beta-D-glucosaminide (1-&gt;4)-beta-linkages in chitin and chitodextrins.. In terms of biological role, degrades chitin, chitotriose and chitobiose. May participate in the defense against nematodes and other pathogens. The polypeptide is Chitotriosidase-1 (Chit1) (Mus musculus (Mouse)).